The following is a 98-amino-acid chain: TACTTTQQTAAYVALVSILSDDNFSQCSTDSGYSMLTATALPTTEQYTKMCASTACQAMIANIITLNPPDCELTVPTSGLVLNVYEYANGFNATCASL.

Intrachain disulfides connect Cys3/Cys71, Cys27/Cys56, and Cys51/Cys95. The N-linked (GlcNAc...) asparagine glycan is linked to Asn92.

This sequence belongs to the elicitin family.

The protein resides in the secreted. In terms of biological role, induces local and distal defense responses (incompatible hypersensitive reaction) in plants from the solanaceae and cruciferae families. Elicits leaf necrosis and causes the accumulation of pathogenesis-related proteins. Might interact with the lipidic molecules of the plasma membrane. The polypeptide is Elicitin Vex1 (Phytopythium vexans (Damping-off fungus)).